The following is a 392-amino-acid chain: Formate-dependent phosphoribosylglycinamide formyltransferase (392 aa).

N(1)-(5-phospho-beta-D-ribosyl)glycinamide is bound by residues 15–16 (EL) and Glu-75. Residues Arg-107, Lys-148, 153–158 (SSGKGQ), 188–191 (EEFL), and Glu-196 contribute to the ATP site. Residues 112-302 (DLAAGELNLR…EFELHLRAVL (191 aa)) enclose the ATP-grasp domain. The Mg(2+) site is built by Glu-261 and Glu-273. N(1)-(5-phospho-beta-D-ribosyl)glycinamide-binding positions include Asp-280, Lys-350, and 357-358 (RR).

The protein belongs to the PurK/PurT family. Homodimer.

The enzyme catalyses N(1)-(5-phospho-beta-D-ribosyl)glycinamide + formate + ATP = N(2)-formyl-N(1)-(5-phospho-beta-D-ribosyl)glycinamide + ADP + phosphate + H(+). It participates in purine metabolism; IMP biosynthesis via de novo pathway; N(2)-formyl-N(1)-(5-phospho-D-ribosyl)glycinamide from N(1)-(5-phospho-D-ribosyl)glycinamide (formate route): step 1/1. In terms of biological role, involved in the de novo purine biosynthesis. Catalyzes the transfer of formate to 5-phospho-ribosyl-glycinamide (GAR), producing 5-phospho-ribosyl-N-formylglycinamide (FGAR). Formate is provided by PurU via hydrolysis of 10-formyl-tetrahydrofolate. This chain is Formate-dependent phosphoribosylglycinamide formyltransferase, found in Synechococcus sp. (strain CC9605).